The sequence spans 159 residues: Phosphopantetheine adenylyltransferase (159 aa).

Residue Thr-9 participates in substrate binding. Residues 9–10 and His-17 contribute to the ATP site; that span reads TF. Residues Lys-41, Leu-73, and Arg-87 each contribute to the substrate site. ATP-binding positions include 88–90, Glu-98, and 123–129; these read GLR and YSFISST.

The protein belongs to the bacterial CoaD family. Homohexamer. Mg(2+) is required as a cofactor.

Its subcellular location is the cytoplasm. The catalysed reaction is (R)-4'-phosphopantetheine + ATP + H(+) = 3'-dephospho-CoA + diphosphate. The protein operates within cofactor biosynthesis; coenzyme A biosynthesis; CoA from (R)-pantothenate: step 4/5. Reversibly transfers an adenylyl group from ATP to 4'-phosphopantetheine, yielding dephospho-CoA (dPCoA) and pyrophosphate. This is Phosphopantetheine adenylyltransferase from Pseudomonas syringae pv. syringae (strain B728a).